We begin with the raw amino-acid sequence, 491 residues long: Conidiogenone synthase PchP450 (491 aa).

A helical membrane pass occupies residues 2–22 (LLLWFGFFSFVCGLVIYRLQF). A heme-binding site is contributed by Cys430.

This sequence belongs to the cytochrome P450 family. The cofactor is heme.

It is found in the membrane. It functions in the pathway secondary metabolite biosynthesis; terpenoid biosynthesis. Its function is as follows. Cytochrome P450 monooxygenase; part of the gene cluster that mediates the biosynthesis of conidiogenone, a diterpene known to induce the conidiation. The bifunctional terpene synthase PrDS converts isopentenyl diphosphate (IPP) and dimethylallyl diphosphate (DMAPP) into deoxyconidiogenol. The C-terminal prenyltransferase (PT) domain of PrDS catalyzes formation of GGPP, whereas the N-terminal terpene cyclase (TC) domain catalyzes the cyclization of GGPP into deoxyconidiogenol. The cytochrome P450 monooxygenase PrP450 then catalyzes two rounds of oxidation to furnish conidiogenone. The protein is Conidiogenone synthase PchP450 of Penicillium rubens (strain ATCC 28089 / DSM 1075 / NRRL 1951 / Wisconsin 54-1255) (Penicillium chrysogenum).